We begin with the raw amino-acid sequence, 237 residues long: Ribonuclease PH (237 aa).

Phosphate contacts are provided by residues Arg-86 and 124–126; that span reads GTR.

The protein belongs to the RNase PH family. In terms of assembly, homohexameric ring arranged as a trimer of dimers.

The catalysed reaction is tRNA(n+1) + phosphate = tRNA(n) + a ribonucleoside 5'-diphosphate. Functionally, phosphorolytic 3'-5' exoribonuclease that plays an important role in tRNA 3'-end maturation. Removes nucleotide residues following the 3'-CCA terminus of tRNAs; can also add nucleotides to the ends of RNA molecules by using nucleoside diphosphates as substrates, but this may not be physiologically important. Probably plays a role in initiation of 16S rRNA degradation (leading to ribosome degradation) during starvation. The chain is Ribonuclease PH from Cereibacter sphaeroides (strain ATCC 17025 / ATH 2.4.3) (Rhodobacter sphaeroides).